The following is a 105-amino-acid chain: Flowering-promoting factor 1-like protein 5 (105 aa).

Belongs to the FPF1 family.

This chain is Flowering-promoting factor 1-like protein 5, found in Oryza sativa subsp. japonica (Rice).